Here is a 325-residue protein sequence, read N- to C-terminus: NADH-quinone oxidoreductase subunit H (325 aa).

8 consecutive transmembrane segments (helical) span residues 11-31, 81-101, 114-134, 154-174, 186-206, 237-257, 265-285, and 304-324; these read ILISVLKAVVILLVVVTCGAF, AIFTLAPVIAFTSLLLSFAIV, IGILFFLMMAGLAVYAVLFAG, LSYEVFLGLSLMGVVAQVGSF, VWNVIPQFFGFLTFAIAGVAV, FFVGEYIGIVTVSALIVTLFF, LPPFIWFALKTAFFMVMFILI, and VCLPLTLLNLLATAAVILYNA.

Belongs to the complex I subunit 1 family. NDH-1 is composed of 13 different subunits. Subunits NuoA, H, J, K, L, M, N constitute the membrane sector of the complex.

It is found in the cell inner membrane. The enzyme catalyses a quinone + NADH + 5 H(+)(in) = a quinol + NAD(+) + 4 H(+)(out). Its function is as follows. NDH-1 shuttles electrons from NADH, via FMN and iron-sulfur (Fe-S) centers, to quinones in the respiratory chain. The immediate electron acceptor for the enzyme in this species is believed to be ubiquinone. Couples the redox reaction to proton translocation (for every two electrons transferred, four hydrogen ions are translocated across the cytoplasmic membrane), and thus conserves the redox energy in a proton gradient. This subunit may bind ubiquinone. The sequence is that of NADH-quinone oxidoreductase subunit H from Yersinia pseudotuberculosis serotype O:3 (strain YPIII).